The sequence spans 72 residues: Translation initiation factor IF-1 (72 aa).

In terms of domain architecture, S1-like spans 1 to 72; sequence MSKDDVIEMQ…TRGRITWRAK (72 aa).

The protein belongs to the IF-1 family. In terms of assembly, component of the 30S ribosomal translation pre-initiation complex which assembles on the 30S ribosome in the order IF-2 and IF-3, IF-1 and N-formylmethionyl-tRNA(fMet); mRNA recruitment can occur at any time during PIC assembly.

Its subcellular location is the cytoplasm. One of the essential components for the initiation of protein synthesis. Stabilizes the binding of IF-2 and IF-3 on the 30S subunit to which N-formylmethionyl-tRNA(fMet) subsequently binds. Helps modulate mRNA selection, yielding the 30S pre-initiation complex (PIC). Upon addition of the 50S ribosomal subunit IF-1, IF-2 and IF-3 are released leaving the mature 70S translation initiation complex. This is Translation initiation factor IF-1 from Clostridium botulinum (strain ATCC 19397 / Type A).